Here is a 599-residue protein sequence, read N- to C-terminus: MTTQVPPSALLPLNPEQLARLQAATTDLTPTQLAWVSGYFWGVLNQQPAALAATPAPAAEMPGITIISASQTGNARRVAEALRDDLLAAKLNVKLVNAGDYKFKQIASEKLLIVVTSTQGEGEPPEEAVALHKFLFSKKAPKLENTAFAVFSLGDSSYEFFCQSGKDFDSKLAELGGERLLDRVDADVEYQAAASEWRARVVDALKSRAPVAAPSQSVATGAVNEIHTSPYSKDAPLVASLSVNQKITGRNSEKDVRHIEIDLGDSGLRYQPGDALGVWYQNDPALVKELVELLWLKGDEPVTVEGKTLPLNEALQWHFELTVNTANIVENYATLTRSETLLPLVGDKAKLQHYAATTPIVDMVRFSPAQLDAEALINLLRPLTPRLYSIASSQAEVENEVHVTVGVVRYDVEGRARAGGASSFLADRVEEEGEVRVFIEHNDNFRLPANPETPVIMIGPGTGIAPFRAFMQQRAADEAPGKNWLFFGNPHFTEDFLYQVEWQRYVKDGVLTRIDLAWSRDQKEKVYVQDKLREQGAELWRWINDGAHIYVCGDANRMAKDVEQALLEVIAEFGGMDTEAADEFLSELRVERRYQRDVY.

One can recognise a Flavodoxin-like domain in the interval 64-202 (ITIISASQTG…AASEWRARVV (139 aa)). Residues 70 to 75 (SQTGNA), 117 to 120 (STQG), and 153 to 162 (LGDSSYEFFC) contribute to the FMN site. The FAD-binding FR-type domain occupies 234–448 (DAPLVASLSV…IEHNDNFRLP (215 aa)). FAD is bound by residues threonine 322, alanine 356, 386 to 389 (RLYS), 404 to 406 (TVG), tyrosine 410, and 419 to 422 (GGAS). NADP(+) contacts are provided by residues 519 to 520 (SR), 525 to 529 (KVYVQ), and aspartate 561. Tyrosine 599 lines the FAD pocket.

This sequence belongs to the NADPH-dependent sulphite reductase flavoprotein subunit CysJ family. In the N-terminal section; belongs to the flavodoxin family. It in the C-terminal section; belongs to the flavoprotein pyridine nucleotide cytochrome reductase family. In terms of assembly, alpha(8)-beta(8). The alpha component is a flavoprotein, the beta component is a hemoprotein. FAD is required as a cofactor. The cofactor is FMN.

It catalyses the reaction hydrogen sulfide + 3 NADP(+) + 3 H2O = sulfite + 3 NADPH + 4 H(+). It functions in the pathway sulfur metabolism; hydrogen sulfide biosynthesis; hydrogen sulfide from sulfite (NADPH route): step 1/1. Functionally, component of the sulfite reductase complex that catalyzes the 6-electron reduction of sulfite to sulfide. This is one of several activities required for the biosynthesis of L-cysteine from sulfate. The flavoprotein component catalyzes the electron flow from NADPH -&gt; FAD -&gt; FMN to the hemoprotein component. This is Sulfite reductase [NADPH] flavoprotein alpha-component from Escherichia coli (strain ATCC 8739 / DSM 1576 / NBRC 3972 / NCIMB 8545 / WDCM 00012 / Crooks).